The primary structure comprises 118 residues: Large ribosomal subunit protein uL18 (118 aa).

It belongs to the universal ribosomal protein uL18 family. Part of the 50S ribosomal subunit; part of the 5S rRNA/L5/L18/L25 subcomplex. Contacts the 5S and 23S rRNAs.

Functionally, this is one of the proteins that bind and probably mediate the attachment of the 5S RNA into the large ribosomal subunit, where it forms part of the central protuberance. This is Large ribosomal subunit protein uL18 from Nitratiruptor sp. (strain SB155-2).